The primary structure comprises 646 residues: UvrABC system protein B (646 aa).

The Helicase ATP-binding domain occupies 25–412; it reads NGIKAGMREQ…QNIVEQIIRP (388 aa). Residue 38–45 participates in ATP binding; the sequence is GVTGSGKT. A Beta-hairpin motif is present at residues 91–114; it reads YYDFYQPEAYIPQTDTYIDKEASI. Residues 428–594 form the Helicase C-terminal domain; it reads QVDDLLSEIR…STRRTLREEE (167 aa). One can recognise a UVR domain in the interval 611–646; that stretch reads ELIIKDLEAEMRDAARNLEFERAARIRDRIMSLKSN.

This sequence belongs to the UvrB family. In terms of assembly, forms a heterotetramer with UvrA during the search for lesions. Interacts with UvrC in an incision complex.

It is found in the cytoplasm. Its function is as follows. The UvrABC repair system catalyzes the recognition and processing of DNA lesions. A damage recognition complex composed of 2 UvrA and 2 UvrB subunits scans DNA for abnormalities. Upon binding of the UvrA(2)B(2) complex to a putative damaged site, the DNA wraps around one UvrB monomer. DNA wrap is dependent on ATP binding by UvrB and probably causes local melting of the DNA helix, facilitating insertion of UvrB beta-hairpin between the DNA strands. Then UvrB probes one DNA strand for the presence of a lesion. If a lesion is found the UvrA subunits dissociate and the UvrB-DNA preincision complex is formed. This complex is subsequently bound by UvrC and the second UvrB is released. If no lesion is found, the DNA wraps around the other UvrB subunit that will check the other stand for damage. The chain is UvrABC system protein B from Methanothermobacter thermautotrophicus (strain ATCC 29096 / DSM 1053 / JCM 10044 / NBRC 100330 / Delta H) (Methanobacterium thermoautotrophicum).